Here is a 345-residue protein sequence, read N- to C-terminus: 2-oxoglutarate-dependent ethylene/succinate-forming enzyme (345 aa).

The Fe2OG dioxygenase domain maps to 167 to 288 (GWHHMRVLRF…RFAMAYFHEP (122 aa)). Residues histidine 191 and histidine 270 each contribute to the Fe cation site.

Belongs to the iron/ascorbate-dependent oxidoreductase family. As to quaternary structure, monomer. Fe(2+) is required as a cofactor.

The catalysed reaction is 2-oxoglutarate + O2 + 2 H(+) = ethene + 3 CO2 + H2O. It carries out the reaction L-arginine + 2-oxoglutarate + O2 = guanidine + L-glutamate 5-semialdehyde + succinate + CO2. It functions in the pathway alkene biosynthesis; ethylene biosynthesis via 2-oxoglutarate. Simultaneously catalyzes two reactions, namely formation of ethylene and of succinate from 2-oxoglutarate. The sequence is that of 2-oxoglutarate-dependent ethylene/succinate-forming enzyme (efe) from Ralstonia nicotianae (strain ATCC BAA-1114 / GMI1000) (Ralstonia solanacearum).